The chain runs to 386 residues: Sphingosine 1-phosphate receptor 4 (386 aa).

The Extracellular segment spans residues 1 to 56 (MNISTWSTLVTPESCHRLAASGHSLLIVLHYNHSGRLASRGGSEDGGGLGMLRGPS). Asn2 and Asn32 each carry an N-linked (GlcNAc...) asparagine glycan. Residues 57 to 77 (VAAGCLVVLENAMVLAAIAIY) form a helical membrane-spanning segment. Residues 78–87 (MRSRRWVYYC) are Cytoplasmic-facing. A helical membrane pass occupies residues 88–108 (LLNITLSDLLTGLAYVVNVLL). Over 109–120 (SGTRTFQLSPVH) the chain is Extracellular. The chain crosses the membrane as a helical span at residues 121 to 141 (WFLREGLLFMALAASTFSLLF). The Cytoplasmic segment spans residues 142–163 (TAGERFATMVRVAESGATKTSR). A helical membrane pass occupies residues 164–184 (VYGCIGLCWLLAAILGLLPLL). The Extracellular segment spans residues 185–208 (GWNCVCAFPRCSSLLPLYSKGYVL). Residues 209–229 (FCVVVFALILVAILSLYGAIF) form a helical membrane-spanning segment. The Cytoplasmic portion of the chain corresponds to 230 to 254 (RVVRANGQKSPRPPARRKSRRLLNT). Residues 255–275 (VLMILVAFVVCWGPLFGLLLA) traverse the membrane as a helical segment. Residues 276-290 (DIFGSNVWAQEYLRG) are Extracellular-facing. A helical transmembrane segment spans residues 291–311 (MDWILALAVFNSAINPLIYSF). Residues 312 to 386 (RSREVQRAVL…LSSISSVRST (75 aa)) are Cytoplasmic-facing. Cys325 carries the S-palmitoyl cysteine lipid modification.

This sequence belongs to the G-protein coupled receptor 1 family. As to expression, specifically expressed in fetal and adult lymphoid and hematopoietic tissue. Expressed in lung, spleen, thymus and lymph node but absent in other non-lymphatic tissue. Coexpressed with GNA15 at the same relative levels in all tissues examined, with the highest levels in adult spleen and lung.

The protein resides in the cell membrane. Receptor for the lysosphingolipid sphingosine 1-phosphate (S1P). S1P is a bioactive lysophospholipid that elicits diverse physiological effect on most types of cells and tissues. May be involved in cell migration processes that are specific for lymphocytes. This chain is Sphingosine 1-phosphate receptor 4 (S1pr4), found in Mus musculus (Mouse).